We begin with the raw amino-acid sequence, 257 residues long: Thiazole synthase (257 aa).

The active-site Schiff-base intermediate with DXP is the K98. 1-deoxy-D-xylulose 5-phosphate is bound by residues G159, 185–186 (AG), and 207–208 (NT).

This sequence belongs to the ThiG family. In terms of assembly, homotetramer. Forms heterodimers with either ThiH or ThiS.

It is found in the cytoplasm. The catalysed reaction is [ThiS sulfur-carrier protein]-C-terminal-Gly-aminoethanethioate + 2-iminoacetate + 1-deoxy-D-xylulose 5-phosphate = [ThiS sulfur-carrier protein]-C-terminal Gly-Gly + 2-[(2R,5Z)-2-carboxy-4-methylthiazol-5(2H)-ylidene]ethyl phosphate + 2 H2O + H(+). It participates in cofactor biosynthesis; thiamine diphosphate biosynthesis. In terms of biological role, catalyzes the rearrangement of 1-deoxy-D-xylulose 5-phosphate (DXP) to produce the thiazole phosphate moiety of thiamine. Sulfur is provided by the thiocarboxylate moiety of the carrier protein ThiS. In vitro, sulfur can be provided by H(2)S. This Anaeromyxobacter sp. (strain Fw109-5) protein is Thiazole synthase.